We begin with the raw amino-acid sequence, 96 residues long: Aspartyl/glutamyl-tRNA(Asn/Gln) amidotransferase subunit C (96 aa).

Belongs to the GatC family. Heterotrimer of A, B and C subunits.

It catalyses the reaction L-glutamyl-tRNA(Gln) + L-glutamine + ATP + H2O = L-glutaminyl-tRNA(Gln) + L-glutamate + ADP + phosphate + H(+). It carries out the reaction L-aspartyl-tRNA(Asn) + L-glutamine + ATP + H2O = L-asparaginyl-tRNA(Asn) + L-glutamate + ADP + phosphate + 2 H(+). Allows the formation of correctly charged Asn-tRNA(Asn) or Gln-tRNA(Gln) through the transamidation of misacylated Asp-tRNA(Asn) or Glu-tRNA(Gln) in organisms which lack either or both of asparaginyl-tRNA or glutaminyl-tRNA synthetases. The reaction takes place in the presence of glutamine and ATP through an activated phospho-Asp-tRNA(Asn) or phospho-Glu-tRNA(Gln). In Bacillus licheniformis (strain ATCC 14580 / DSM 13 / JCM 2505 / CCUG 7422 / NBRC 12200 / NCIMB 9375 / NCTC 10341 / NRRL NRS-1264 / Gibson 46), this protein is Aspartyl/glutamyl-tRNA(Asn/Gln) amidotransferase subunit C.